Here is a 460-residue protein sequence, read N- to C-terminus: Diguanylate cyclase DosC (460 aa).

Residue His-98 coordinates heme. Positions 325–458 (TPLSVLIIDV…GRNRVELWKA (134 aa)) constitute a GGDEF domain. Asp-333 serves as a coordination point for Mg(2+). Residues Asn-341 and Asp-350 each contribute to the substrate site. Position 376 (Asp-376) interacts with Mg(2+). The active-site Proton acceptor is the Asp-376.

Heme serves as cofactor. Requires Mg(2+) as cofactor.

It carries out the reaction 2 GTP = 3',3'-c-di-GMP + 2 diphosphate. The protein operates within purine metabolism; 3',5'-cyclic di-GMP biosynthesis. Globin-coupled heme-based oxygen sensor protein displaying diguanylate cyclase (DGC) activity in response to oxygen availability. Thus, catalyzes the synthesis of cyclic diguanylate (c-di-GMP) via the condensation of 2 GTP molecules. Cyclic-di-GMP is a second messenger which controls cell surface-associated traits in bacteria. This chain is Diguanylate cyclase DosC (dosC), found in Shigella sonnei (strain Ss046).